The primary structure comprises 427 residues: Enolase (427 aa).

(2R)-2-phosphoglycerate is bound at residue Gln-163. Residue Glu-205 is the Proton donor of the active site. Positions 242, 285, and 312 each coordinate Mg(2+). Lys-337, Arg-366, Ser-367, and Lys-388 together coordinate (2R)-2-phosphoglycerate. Lys-337 (proton acceptor) is an active-site residue.

This sequence belongs to the enolase family. Mg(2+) serves as cofactor.

Its subcellular location is the cytoplasm. It localises to the secreted. It is found in the cell surface. It carries out the reaction (2R)-2-phosphoglycerate = phosphoenolpyruvate + H2O. Its pathway is carbohydrate degradation; glycolysis; pyruvate from D-glyceraldehyde 3-phosphate: step 4/5. Catalyzes the reversible conversion of 2-phosphoglycerate (2-PG) into phosphoenolpyruvate (PEP). It is essential for the degradation of carbohydrates via glycolysis. The chain is Enolase from Burkholderia mallei (strain NCTC 10247).